A 544-amino-acid chain; its full sequence is Exodeoxyribonuclease 7 large subunit (544 aa).

Residues 522 to 544 form a disordered region; sequence PETPPKSRKADNPPEPPEQTSFL.

Belongs to the XseA family. In terms of assembly, heterooligomer composed of large and small subunits.

Its subcellular location is the cytoplasm. It carries out the reaction Exonucleolytic cleavage in either 5'- to 3'- or 3'- to 5'-direction to yield nucleoside 5'-phosphates.. Its function is as follows. Bidirectionally degrades single-stranded DNA into large acid-insoluble oligonucleotides, which are then degraded further into small acid-soluble oligonucleotides. This Zymomonas mobilis subsp. mobilis (strain ATCC 31821 / ZM4 / CP4) protein is Exodeoxyribonuclease 7 large subunit.